Consider the following 113-residue polypeptide: Large ribosomal subunit protein uL22 (113 aa).

The protein belongs to the universal ribosomal protein uL22 family. As to quaternary structure, part of the 50S ribosomal subunit.

Its function is as follows. This protein binds specifically to 23S rRNA; its binding is stimulated by other ribosomal proteins, e.g. L4, L17, and L20. It is important during the early stages of 50S assembly. It makes multiple contacts with different domains of the 23S rRNA in the assembled 50S subunit and ribosome. The globular domain of the protein is located near the polypeptide exit tunnel on the outside of the subunit, while an extended beta-hairpin is found that lines the wall of the exit tunnel in the center of the 70S ribosome. The sequence is that of Large ribosomal subunit protein uL22 from Geobacillus thermodenitrificans (strain NG80-2).